The chain runs to 189 residues: Peptidyl-tRNA hydrolase (189 aa).

Position 15 (Tyr15) interacts with tRNA. His20 functions as the Proton acceptor in the catalytic mechanism. TRNA is bound by residues Phe66, Asn68, and Asn114.

The protein belongs to the PTH family. In terms of assembly, monomer.

The protein resides in the cytoplasm. The catalysed reaction is an N-acyl-L-alpha-aminoacyl-tRNA + H2O = an N-acyl-L-amino acid + a tRNA + H(+). Hydrolyzes ribosome-free peptidyl-tRNAs (with 1 or more amino acids incorporated), which drop off the ribosome during protein synthesis, or as a result of ribosome stalling. Functionally, catalyzes the release of premature peptidyl moieties from peptidyl-tRNA molecules trapped in stalled 50S ribosomal subunits, and thus maintains levels of free tRNAs and 50S ribosomes. This chain is Peptidyl-tRNA hydrolase, found in Streptococcus pneumoniae (strain JJA).